A 122-amino-acid polypeptide reads, in one-letter code: Small ribosomal subunit protein uS12 (122 aa).

Belongs to the universal ribosomal protein uS12 family. Part of the 30S ribosomal subunit. Contacts proteins S8 and S17. May interact with IF1 in the 30S initiation complex.

In terms of biological role, with S4 and S5 plays an important role in translational accuracy. Functionally, interacts with and stabilizes bases of the 16S rRNA that are involved in tRNA selection in the A site and with the mRNA backbone. Located at the interface of the 30S and 50S subunits, it traverses the body of the 30S subunit contacting proteins on the other side and probably holding the rRNA structure together. The combined cluster of proteins S8, S12 and S17 appears to hold together the shoulder and platform of the 30S subunit. The sequence is that of Small ribosomal subunit protein uS12 from Corynebacterium efficiens (strain DSM 44549 / YS-314 / AJ 12310 / JCM 11189 / NBRC 100395).